Reading from the N-terminus, the 295-residue chain is 33 kDa chaperonin (295 aa).

Disulfide bonds link cysteine 236–cysteine 238 and cysteine 269–cysteine 272.

It belongs to the HSP33 family. Post-translationally, under oxidizing conditions two disulfide bonds are formed involving the reactive cysteines. Under reducing conditions zinc is bound to the reactive cysteines and the protein is inactive.

The protein localises to the cytoplasm. Redox regulated molecular chaperone. Protects both thermally unfolding and oxidatively damaged proteins from irreversible aggregation. Plays an important role in the bacterial defense system toward oxidative stress. This is 33 kDa chaperonin from Geobacter sp. (strain M21).